A 266-amino-acid polypeptide reads, in one-letter code: MTNIVVLIKQVPDTWSERKLTDGDFTLDREAADAVLDEINERAVEEALQIREKEAVDGIKGSVTVLTAGPERATEAIRKALSMGADKAVHLKDDGMHGSDVIQTGWALARALGTIEGTELVIAGNESTDGVGGVVPAIIAEYLGLPQLTHLRTISVEGGKITGERETDEGVFTLEAVLPAVVSVNEKINEPRFPSFKGIMAAKKKEVTVLTLAEIGVEVDEVGLANAGSKVLVSTPKPAKTAGEKITDEGDGGNQIVQYLVAQKII.

It belongs to the ETF beta-subunit/FixA family. Heterodimer of an alpha and a beta subunit. It depends on FAD as a cofactor. The cofactor is AMP.

Its function is as follows. The electron transfer flavoprotein serves as a specific electron acceptor for other dehydrogenases. It transfers the electrons to the main respiratory chain via ETF-ubiquinone oxidoreductase (ETF dehydrogenase). The protein is Electron transfer flavoprotein subunit beta (etfB) of Mycobacterium leprae (strain TN).